The sequence spans 60 residues: Large ribosomal subunit protein bL32 (60 aa).

Positions 1-16 are enriched in basic residues; sequence MAVPRRKTSPSRRGMR. The segment at 1-60 is disordered; sequence MAVPRRKTSPSRRGMRRSADAIKKPTYVEDKDSGELRRPHHLDLKTGMYKGRQVLKKKDA. The segment covering 17 to 44 has biased composition (basic and acidic residues); the sequence is RSADAIKKPTYVEDKDSGELRRPHHLDL.

Belongs to the bacterial ribosomal protein bL32 family.

This chain is Large ribosomal subunit protein bL32, found in Bradyrhizobium sp. (strain BTAi1 / ATCC BAA-1182).